The chain runs to 240 residues: Lactate utilization protein C (240 aa).

The protein belongs to the LutC/YkgG family.

Is involved in L-lactate degradation and allows cells to grow with lactate as the sole carbon source. The polypeptide is Lactate utilization protein C (Geobacillus kaustophilus (strain HTA426)).